Here is a 109-residue protein sequence, read N- to C-terminus: U26-theraphotoxin-Cg1b (109 aa).

An N-terminal signal peptide occupies residues 1-18 (MNTIIPLLLLSLLITVYA). Residues 19 to 67 (YALEDGNKEEMQDIAESEFEASNEMLQLAHLLEADRAETEEDRNSRQKR) constitute a propeptide that is removed on maturation. 3 disulfides stabilise this stretch: cysteine 68–cysteine 83, cysteine 75–cysteine 88, and cysteine 82–cysteine 103.

This sequence belongs to the neurotoxin 14 (magi-1) family. 07 (Jztx-56) subfamily. In terms of tissue distribution, expressed by the venom gland.

The protein resides in the secreted. Its function is as follows. Probable ion channel inhibitor. In Chilobrachys guangxiensis (Chinese earth tiger tarantula), this protein is U26-theraphotoxin-Cg1b.